The chain runs to 190 residues: Threonylcarbamoyl-AMP synthase (190 aa).

Positions 7 to 190 (LSSLIKCIRK…IVNGKLIRYV (184 aa)) constitute a YrdC-like domain.

It belongs to the SUA5 family. TsaC subfamily.

The protein resides in the cytoplasm. The catalysed reaction is L-threonine + hydrogencarbonate + ATP = L-threonylcarbamoyladenylate + diphosphate + H2O. In terms of biological role, required for the formation of a threonylcarbamoyl group on adenosine at position 37 (t(6)A37) in tRNAs that read codons beginning with adenine. Catalyzes the conversion of L-threonine, HCO(3)(-)/CO(2) and ATP to give threonylcarbamoyl-AMP (TC-AMP) as the acyladenylate intermediate, with the release of diphosphate. This chain is Threonylcarbamoyl-AMP synthase, found in Buchnera aphidicola subsp. Schizaphis graminum (strain Sg).